Here is a 225-residue protein sequence, read N- to C-terminus: Heptaprenylglyceryl phosphate synthase (225 aa).

Lysine 6 contacts sn-glycerol 1-phosphate. 2 residues coordinate Mg(2+): aspartate 8 and threonine 34. Sn-glycerol 1-phosphate contacts are provided by residues 153-158, glycine 183, and 203-204; these read YVEYSG and GN.

The protein belongs to the GGGP/HepGP synthase family. Group I subfamily. In terms of assembly, homodimer. Mg(2+) serves as cofactor.

The catalysed reaction is sn-glycerol 1-phosphate + all-trans-heptaprenyl diphosphate = 3-heptaprenyl-sn-glycero-1-phosphate + diphosphate. It participates in membrane lipid metabolism; glycerophospholipid metabolism. In terms of biological role, prenyltransferase that catalyzes in vivo the transfer of the heptaprenyl moiety of heptaprenyl pyrophosphate (HepPP; 35 carbon atoms) to the C3 hydroxyl of sn-glycerol-1-phosphate (G1P), producing heptaprenylglyceryl phosphate (HepGP). This reaction is an ether-bond-formation step in the biosynthesis of archaea-type G1P-based membrane lipids found in Bacillales. This chain is Heptaprenylglyceryl phosphate synthase, found in Listeria monocytogenes serotype 4b (strain CLIP80459).